Reading from the N-terminus, the 366-residue chain is Aminomethyltransferase (366 aa).

Belongs to the GcvT family. As to quaternary structure, the glycine cleavage system is composed of four proteins: P, T, L and H.

It carries out the reaction N(6)-[(R)-S(8)-aminomethyldihydrolipoyl]-L-lysyl-[protein] + (6S)-5,6,7,8-tetrahydrofolate = N(6)-[(R)-dihydrolipoyl]-L-lysyl-[protein] + (6R)-5,10-methylene-5,6,7,8-tetrahydrofolate + NH4(+). Its function is as follows. The glycine cleavage system catalyzes the degradation of glycine. The sequence is that of Aminomethyltransferase from Bacillus mycoides (strain KBAB4) (Bacillus weihenstephanensis).